A 180-amino-acid polypeptide reads, in one-letter code: Acireductone dioxygenase (180 aa).

The Fe(2+) site is built by His-97, His-99, Glu-103, and His-141. Positions 97, 99, 103, and 141 each coordinate Ni(2+).

It belongs to the acireductone dioxygenase (ARD) family. In terms of assembly, monomer. Fe(2+) is required as a cofactor. It depends on Mg(2+) as a cofactor. The cofactor is Ni(2+). Mn(2+) serves as cofactor. Requires Co(2+) as cofactor.

The enzyme catalyses 1,2-dihydroxy-5-(methylsulfanyl)pent-1-en-3-one + O2 = 3-(methylsulfanyl)propanoate + CO + formate + 2 H(+). The catalysed reaction is 1,2-dihydroxy-5-(methylsulfanyl)pent-1-en-3-one + O2 = 4-methylsulfanyl-2-oxobutanoate + formate + 2 H(+). It participates in amino-acid biosynthesis; L-methionine biosynthesis via salvage pathway; L-methionine from S-methyl-5-thio-alpha-D-ribose 1-phosphate: step 5/6. Its function is as follows. Catalyzes 2 different reactions between oxygen and the acireductone 1,2-dihydroxy-3-keto-5-methylthiopentene (DHK-MTPene) depending upon the metal bound in the active site. Fe-containing acireductone dioxygenase (Fe-ARD) produces formate and 2-keto-4-methylthiobutyrate (KMTB), the alpha-ketoacid precursor of methionine in the methionine recycle pathway. Ni-containing acireductone dioxygenase (Ni-ARD) produces methylthiopropionate, carbon monoxide and formate, and does not lie on the methionine recycle pathway. The chain is Acireductone dioxygenase (mtnD) from Klebsiella oxytoca.